We begin with the raw amino-acid sequence, 207 residues long: Small ribosomal subunit protein uS4A (207 aa).

An S4 RNA-binding domain is found at 98–158; that stretch reads TRLDNVAYRL…EKSKSSAKFK (61 aa).

The protein belongs to the universal ribosomal protein uS4 family. In terms of assembly, part of the 30S ribosomal subunit. Contacts protein S5. The interaction surface between S4 and S5 is involved in control of translational fidelity.

In terms of biological role, one of the primary rRNA binding proteins, it binds directly to 16S rRNA where it nucleates assembly of the body of the 30S subunit. With S5 and S12 plays an important role in translational accuracy. The chain is Small ribosomal subunit protein uS4A from Alkaliphilus oremlandii (strain OhILAs) (Clostridium oremlandii (strain OhILAs)).